Here is a 4377-residue protein sequence, read N- to C-terminus: Ankyrin-3 (4377 aa).

Positions M1–S44 are disordered. Positions K25 to K38 are enriched in basic residues. A Phosphoserine modification is found at S39. ANK repeat units follow at residues N73–A102, K106–A135, N139–L168, D172–V201, L203–V230, S234–F263, N267–A296, D300–S329, N333–D362, D366–A395, N399–A428, S432–T461, R465–A494, D498–A527, S531–I560, K564–A593, S597–A626, N630–A659, Q663–L692, S696–A725, M729–A758, N762–E791, and N795–T825. Position 468 is a phosphoserine (T468). The residue at position 623 (S623) is a Phosphoserine. T765 and E791 each carry phosphoserine. Phosphoserine occurs at positions 847, 861, 867, 913, 916, 922, 957, 959, and 1113. ZU5 domains are found at residues F984–R1139 and K1141–C1288. Positions V1273–E1407 are UPA domain. Residues S1445, S1459, and S1470 each carry the phosphoserine modification. A compositionally biased stretch (low complexity) spans S1519–S1539. Positions S1519–I1540 are disordered. 9 positions are modified to phosphoserine: S1622, S1625, S1632, I1651, L1658, S1984, S2111, S2123, and S2126. 15 disordered regions span residues V1968–D1987, T2107–P2159, Y2176–H2245, A2299–M2322, F2383–D2433, D2474–T2508, L2588–I2751, Q2795–S2824, P3036–D3067, T3131–H3272, P3298–P3516, K3538–K3607, G3635–L3718, K3868–K3897, and K4019–T4090. Positions P1977–E1986 are enriched in basic and acidic residues. A compositionally biased stretch (basic and acidic residues) spans F2115–K2136. Residues T2137–S2146 show a composition bias toward polar residues. A compositionally biased stretch (basic and acidic residues) spans A2299–A2308. Over residues G2390–A2399 the composition is skewed to acidic residues. Residues L2407 to S2417 show a composition bias toward polar residues. Composition is skewed to basic and acidic residues over residues G2497 to T2508 and L2588 to K2612. Positions S2622–P2631 are enriched in low complexity. The span at S2706–S2716 shows a compositional bias: polar residues. The span at L2720–G2742 shows a compositional bias: basic and acidic residues. Positions S2796–D2807 are enriched in polar residues. Composition is skewed to polar residues over residues E3154–P3186 and K3214–E3224. 2 stretches are compositionally biased toward basic and acidic residues: residues A3227–Q3242 and K3335–E3361. A compositionally biased stretch (polar residues) spans S3377–E3402. A compositionally biased stretch (acidic residues) spans A3409–T3428. 2 stretches are compositionally biased toward basic and acidic residues: residues E3465 to P3481 and R3549 to S3575. Residues P3576–P3598 show a composition bias toward low complexity. The span at H3637–K3651 shows a compositional bias: basic and acidic residues. 4 stretches are compositionally biased toward polar residues: residues V3654–T3669, E3676–K3713, H3880–K3897, and S4033–K4052. Positions S4053 to R4076 are enriched in basic and acidic residues. A Death domain is found at T4090–I4174. 2 positions are modified to phosphoserine: S4211 and S4229. 2 disordered regions span residues N4251–S4298 and P4323–S4377. The segment covering P4268–Q4277 has biased composition (polar residues). S4290 and S4298 each carry phosphoserine. Over residues G4337 to E4347 the composition is skewed to basic and acidic residues. At S4350 the chain carries Phosphoserine. The span at V4362 to S4377 shows a compositional bias: basic residues.

Directly interacts with DMD and betaDAG1. This interaction does not interfere with binding between DMD and betaDAG1. It is also required for DMD and betaDAG1 retention at costameres. Interacts (via N-terminal ANK repeats) with SCHIP1 isoform 5 (via C-terminus); this interaction is required for the localization at axon initial segments (AISs) and nodes of Ranvier (NRs). May be a constituent of a NFASC/NRCAM/ankyrin G complex. Interacts with RHBG. Interacts with PLEC and FLNC. Interacts with KCNA1; this inhibits channel activity. Interacts (via ANK repeats) with IQCJ-SCHIP1; required for IQCJ-SCHIP1 localization at axon initial segments (AIS) and nodes of Ranvier. Interacts with SCHIP1. Interacts with SCN5A. Interacts with PKP2 and GJA1/CX43. In terms of tissue distribution, expressed in brain, neurons, muscles and other tissues.

It localises to the cytoplasm. The protein localises to the cytoskeleton. It is found in the cell projection. The protein resides in the axon. Its subcellular location is the cell membrane. It localises to the sarcolemma. The protein localises to the postsynaptic cell membrane. It is found in the lysosome. The protein resides in the T-tubule. Its subcellular location is the golgi apparatus. Membrane-cytoskeleton linker. May participate in the maintenance/targeting of ion channels and cell adhesion molecules at the nodes of Ranvier and axonal initial segments. In skeletal muscle, required for costamere localization of DMD and betaDAG1. Regulates KCNA1 channel activity in function of dietary Mg(2+) levels, and thereby contributes to the regulation of renal Mg(2+) reabsorption. Required for intracellular adhesion and junctional conductance in myocytes, potentially via stabilization of GJA1/CX43 protein abundance and promotion of PKP2, GJA1/CX43, and SCN5A/Nav1.5 localization to cell-cell junctions. Its function is as follows. May be part of a Golgi-specific membrane cytoskeleton in association with beta-spectrin. This Homo sapiens (Human) protein is Ankyrin-3.